The chain runs to 65 residues: Large ribosomal subunit protein bL33 (65 aa).

The tract at residues 19 to 40 (TVPSSKKRSAGVSRYTTEKNRR) is disordered.

It belongs to the bacterial ribosomal protein bL33 family.

This is Large ribosomal subunit protein bL33 from Prochlorococcus marinus (strain NATL2A).